The following is a 390-amino-acid chain: Queuine tRNA-ribosyltransferase (390 aa).

Asp-92 functions as the Proton acceptor in the catalytic mechanism. Residues 92-96 (DSGGF), Asp-146, Gln-195, and Gly-222 each bind substrate. The interval 253-259 (GVGTPED) is RNA binding. Asp-272 (nucleophile) is an active-site residue. The segment at 277-281 (TRNAR) is RNA binding; important for wobble base 34 recognition. Positions 310, 312, 315, and 354 each coordinate Zn(2+).

This sequence belongs to the queuine tRNA-ribosyltransferase family. As to quaternary structure, homodimer. Within each dimer, one monomer is responsible for RNA recognition and catalysis, while the other monomer binds to the replacement base PreQ1. Zn(2+) serves as cofactor.

The catalysed reaction is 7-aminomethyl-7-carbaguanine + guanosine(34) in tRNA = 7-aminomethyl-7-carbaguanosine(34) in tRNA + guanine. It functions in the pathway tRNA modification; tRNA-queuosine biosynthesis. Functionally, catalyzes the base-exchange of a guanine (G) residue with the queuine precursor 7-aminomethyl-7-deazaguanine (PreQ1) at position 34 (anticodon wobble position) in tRNAs with GU(N) anticodons (tRNA-Asp, -Asn, -His and -Tyr). Catalysis occurs through a double-displacement mechanism. The nucleophile active site attacks the C1' of nucleotide 34 to detach the guanine base from the RNA, forming a covalent enzyme-RNA intermediate. The proton acceptor active site deprotonates the incoming PreQ1, allowing a nucleophilic attack on the C1' of the ribose to form the product. After dissociation, two additional enzymatic reactions on the tRNA convert PreQ1 to queuine (Q), resulting in the hypermodified nucleoside queuosine (7-(((4,5-cis-dihydroxy-2-cyclopenten-1-yl)amino)methyl)-7-deazaguanosine). This Verminephrobacter eiseniae (strain EF01-2) protein is Queuine tRNA-ribosyltransferase.